The following is a 204-amino-acid chain: Large ribosomal subunit protein bL25 (204 aa).

Positions 1–23 are disordered; it reads MSETLHLSAETRDRAGKGASRAL.

The protein belongs to the bacterial ribosomal protein bL25 family. CTC subfamily. In terms of assembly, part of the 50S ribosomal subunit; part of the 5S rRNA/L5/L18/L25 subcomplex. Contacts the 5S rRNA. Binds to the 5S rRNA independently of L5 and L18.

Its function is as follows. This is one of the proteins that binds to the 5S RNA in the ribosome where it forms part of the central protuberance. In Novosphingobium aromaticivorans (strain ATCC 700278 / DSM 12444 / CCUG 56034 / CIP 105152 / NBRC 16084 / F199), this protein is Large ribosomal subunit protein bL25.